Consider the following 196-residue polypeptide: Thymidine kinase (196 aa).

Residues 9-16 and 87-90 contribute to the ATP site; these read SAMNAGKS and DECQ. Glu-88 functions as the Proton acceptor in the catalytic mechanism. Residues Cys-145, Cys-147, Cys-182, and His-185 each coordinate Zn(2+).

Belongs to the thymidine kinase family. In terms of assembly, homotetramer.

It is found in the cytoplasm. The enzyme catalyses thymidine + ATP = dTMP + ADP + H(+). This Yersinia pestis protein is Thymidine kinase.